The chain runs to 82 residues: DNA-directed RNA polymerase subunit omega (82 aa).

The protein belongs to the RNA polymerase subunit omega family. As to quaternary structure, the RNAP catalytic core consists of 2 alpha, 1 beta, 1 beta' and 1 omega subunit. When a sigma factor is associated with the core the holoenzyme is formed, which can initiate transcription.

It carries out the reaction RNA(n) + a ribonucleoside 5'-triphosphate = RNA(n+1) + diphosphate. Its function is as follows. Promotes RNA polymerase assembly. Latches the N- and C-terminal regions of the beta' subunit thereby facilitating its interaction with the beta and alpha subunits. The polypeptide is DNA-directed RNA polymerase subunit omega (Lacticaseibacillus casei (strain BL23) (Lactobacillus casei)).